Reading from the N-terminus, the 943-residue chain is Protein translocase subunit SecA (943 aa).

ATP-binding positions include Gln-90, 108-112 (GEGKT), and Asp-509. The disordered stretch occupies residues 535-562 (PDNEHKPPIPKQRNSKSKGGFSRKAGSN).

The protein belongs to the SecA family. Monomer and homodimer. Part of the essential Sec protein translocation apparatus which comprises SecA, SecYEG and auxiliary proteins SecDF. Other proteins may also be involved.

Its subcellular location is the cell inner membrane. The protein localises to the cellular thylakoid membrane. It is found in the cytoplasm. It carries out the reaction ATP + H2O + cellular proteinSide 1 = ADP + phosphate + cellular proteinSide 2.. Its function is as follows. Part of the Sec protein translocase complex. Interacts with the SecYEG preprotein conducting channel. Has a central role in coupling the hydrolysis of ATP to the transfer of proteins into and across the cell membrane, serving as an ATP-driven molecular motor driving the stepwise translocation of polypeptide chains across the membrane. In terms of biological role, probably participates in protein translocation into and across both the cytoplasmic and thylakoid membranes in cyanobacterial cells. The chain is Protein translocase subunit SecA from Prochlorococcus marinus (strain AS9601).